Here is a 648-residue protein sequence, read N- to C-terminus: Translation factor GUF1 homolog, mitochondrial (648 aa).

The tr-type G domain maps to 55–247 (ERVRNFSIIA…AVIERIPSPP (193 aa)). GTP-binding positions include 64 to 71 (AHVDHGKS), 140 to 144 (DTPGH), and 194 to 197 (NKID).

This sequence belongs to the TRAFAC class translation factor GTPase superfamily. Classic translation factor GTPase family. LepA subfamily.

Its subcellular location is the mitochondrion inner membrane. The catalysed reaction is GTP + H2O = GDP + phosphate + H(+). Its function is as follows. Promotes mitochondrial protein synthesis. May act as a fidelity factor of the translation reaction, by catalyzing a one-codon backward translocation of tRNAs on improperly translocated ribosomes. Binds to mitochondrial ribosomes in a GTP-dependent manner. This Oryza sativa subsp. indica (Rice) protein is Translation factor GUF1 homolog, mitochondrial.